Consider the following 518-residue polypeptide: Subtilisin-like protease 1 (518 aa).

The N-terminal stretch at 1-19 (MGVFRFISISLAAVSAANA) is a signal peptide. A propeptide spanning residues 20–116 (AQILSMPHAQ…VEPDTIISVH (97 aa)) is cleaved from the precursor. Residues 34 to 115 (SYIVMMKDDT…FVEPDTIISV (82 aa)) enclose the Inhibitor I9 domain. In terms of domain architecture, Peptidase S8 spans 126–400 (SWGLARISNP…NVLINNGGAK (275 aa)). Active-site charge relay system residues include Asp158 and His190. The tract at residues 175–198 (GSNQVNDGDDRDGSGHGTHTSGTM) is disordered. Residues Asn233 and Asn251 are each glycosylated (N-linked (GlcNAc...) asparagine). A compositionally biased stretch (polar residues) spans 282 to 294 (NDNQDAQSSSPAS). The disordered stretch occupies residues 282 to 312 (NDNQDAQSSSPASEPSVCTVGSSAEDDSRSS). The active-site Charge relay system is Ser345. Residues 378–394 (TSSITDAGPGTPTNVLI) show a composition bias toward polar residues. The tract at residues 378 to 496 (TSSITDAGPG…PYPGGDNFDF (119 aa)) is disordered. 2 stretches are compositionally biased toward pro residues: residues 405 to 470 (NPNP…PGEP) and 478 to 487 (APAPQHPHTP).

This sequence belongs to the peptidase S8 family.

It is found in the secreted. In terms of biological role, secreted subtilisin-like serine protease with keratinolytic activity that contributes to pathogenicity. The protein is Subtilisin-like protease 1 (SUB1) of Trichophyton verrucosum (strain HKI 0517).